Consider the following 151-residue polypeptide: Putative pre-16S rRNA nuclease (151 aa).

Belongs to the YqgF nuclease family.

It is found in the cytoplasm. Functionally, could be a nuclease involved in processing of the 5'-end of pre-16S rRNA. This Nitrosospira multiformis (strain ATCC 25196 / NCIMB 11849 / C 71) protein is Putative pre-16S rRNA nuclease.